The following is a 340-amino-acid chain: Phosphoribosylformylglycinamidine cyclo-ligase (340 aa).

It belongs to the AIR synthase family.

The protein resides in the cytoplasm. It catalyses the reaction 2-formamido-N(1)-(5-O-phospho-beta-D-ribosyl)acetamidine + ATP = 5-amino-1-(5-phospho-beta-D-ribosyl)imidazole + ADP + phosphate + H(+). Its pathway is purine metabolism; IMP biosynthesis via de novo pathway; 5-amino-1-(5-phospho-D-ribosyl)imidazole from N(2)-formyl-N(1)-(5-phospho-D-ribosyl)glycinamide: step 2/2. The chain is Phosphoribosylformylglycinamidine cyclo-ligase from Streptococcus sanguinis (strain SK36).